A 644-amino-acid polypeptide reads, in one-letter code: uncharacterized protein (644 aa).

The segment at 1 to 39 (MKANGLDNDPARTRMERTDIDSEHPEAQPLLNNNHRTLG) is disordered. Residues 1–90 (MKANGLDNDP…ILNILILINT (90 aa)) are Cytoplasmic-facing. The segment covering 9-26 (DPARTRMERTDIDSEHPE) has biased composition (basic and acidic residues). 3 positions are modified to phosphoserine: serine 22, serine 56, and serine 63. A helical membrane pass occupies residues 91–111 (IWLVTTLISDFFFNINILFGF). Residues 112-122 (SNRYASFNDLT) lie on the Vacuolar side of the membrane. A helical transmembrane segment spans residues 123–143 (LIFISIIANSFNLWFNKLGLY). Over 144-147 (SALD) the chain is Cytoplasmic. Residues 148-168 (YSLNVTLCVLTLFNLALTYLI) traverse the membrane as a helical segment. The Vacuolar portion of the chain corresponds to 169 to 174 (KYTRQR). A helical transmembrane segment spans residues 175 to 195 (IGFVGTFTYLWTSFSFFIGAI). At 196–271 (LDWYLLFYNN…EWVSIGFRNT (76 aa)) the chain is on the cytoplasmic side. The tract at residues 225–251 (NENHTNSTENRDRSQYGSGSPTPTHRS) is disordered. Over residues 239-251 (QYGSGSPTPTHRS) the composition is skewed to polar residues. Phosphoserine is present on serine 244. The chain crosses the membrane as a helical span at residues 272–292 (IKFLILIFFALFTLNTLLTTL). The Vacuolar portion of the chain corresponds to 293–644 (DTYRLTHKLP…IGELGKLTED (352 aa)). The AB hydrolase-1 domain maps to 348 to 619 (PIILFEHGGY…IVEGGHEIYK (272 aa)). The segment at 469–492 (GRGDGDDGDDGNGNDGDGRNHDKT) is disordered.

The protein resides in the vacuole membrane. This is an uncharacterized protein from Saccharomyces cerevisiae (strain YJM789) (Baker's yeast).